The primary structure comprises 231 residues: LexA repressor (231 aa).

Positions 31 to 51 form a DNA-binding region, H-T-H motif; that stretch reads RAEIATEFGFRSANAAEEHLQ. Active-site for autocatalytic cleavage activity residues include Ser-148 and Lys-185.

This sequence belongs to the peptidase S24 family. Homodimer.

The catalysed reaction is Hydrolysis of Ala-|-Gly bond in repressor LexA.. Its function is as follows. Represses a number of genes involved in the response to DNA damage (SOS response), including recA and lexA. In the presence of single-stranded DNA, RecA interacts with LexA causing an autocatalytic cleavage which disrupts the DNA-binding part of LexA, leading to derepression of the SOS regulon and eventually DNA repair. The chain is LexA repressor from Leptothrix cholodnii (strain ATCC 51168 / LMG 8142 / SP-6) (Leptothrix discophora (strain SP-6)).